Reading from the N-terminus, the 203-residue chain is Pyridoxal 5'-phosphate synthase subunit PdxT (203 aa).

54-56 (GES) contributes to the L-glutamine binding site. The active-site Nucleophile is the C86. L-glutamine contacts are provided by residues R113 and 141–142 (IR). Residues H177 and E179 each act as charge relay system in the active site.

This sequence belongs to the glutaminase PdxT/SNO family. In the presence of PdxS, forms a dodecamer of heterodimers. Only shows activity in the heterodimer.

The catalysed reaction is aldehydo-D-ribose 5-phosphate + D-glyceraldehyde 3-phosphate + L-glutamine = pyridoxal 5'-phosphate + L-glutamate + phosphate + 3 H2O + H(+). It catalyses the reaction L-glutamine + H2O = L-glutamate + NH4(+). The protein operates within cofactor biosynthesis; pyridoxal 5'-phosphate biosynthesis. Catalyzes the hydrolysis of glutamine to glutamate and ammonia as part of the biosynthesis of pyridoxal 5'-phosphate. The resulting ammonia molecule is channeled to the active site of PdxS. The protein is Pyridoxal 5'-phosphate synthase subunit PdxT of Halobacterium salinarum (strain ATCC 29341 / DSM 671 / R1).